We begin with the raw amino-acid sequence, 225 residues long: uncharacterized protein (225 aa).

Residues 1–21 (MSLHYYLFIFWILAFVQFSHA) form the signal peptide.

As to expression, prismatic layer of shell (at protein level).

It localises to the secreted. This is an uncharacterized protein from Margaritifera margaritifera (Freshwater pearl mussel).